We begin with the raw amino-acid sequence, 206 residues long: LexA repressor (206 aa).

Positions 28–48 (VREIGQAVGLASSSTVHGHLS) form a DNA-binding region, H-T-H motif. Active-site for autocatalytic cleavage activity residues include Ser128 and Lys166.

It belongs to the peptidase S24 family. In terms of assembly, homodimer.

It carries out the reaction Hydrolysis of Ala-|-Gly bond in repressor LexA.. Represses a number of genes involved in the response to DNA damage (SOS response), including recA and lexA. In the presence of single-stranded DNA, RecA interacts with LexA causing an autocatalytic cleavage which disrupts the DNA-binding part of LexA, leading to derepression of the SOS regulon and eventually DNA repair. This chain is LexA repressor, found in Bacillus thuringiensis (strain Al Hakam).